We begin with the raw amino-acid sequence, 795 residues long: Antibiotic resistant DNA gyrase subunit B (795 aa).

The Toprim domain occupies 421–536; sequence SELYLVEGNS…RGYIYIAQPP (116 aa). Residues Glu-427, Asp-501, and Asp-503 each contribute to the Mg(2+) site.

It belongs to the type II topoisomerase GyrB family. As to quaternary structure, heterotetramer, composed of two GyrA and two GyrB chains. In the heterotetramer, GyrA contains the active site tyrosine that forms a transient covalent intermediate with DNA, while GyrB binds cofactors and catalyzes ATP hydrolysis. The cofactor is Mg(2+). It depends on Mn(2+) as a cofactor. Ca(2+) serves as cofactor.

It localises to the cytoplasm. It catalyses the reaction ATP-dependent breakage, passage and rejoining of double-stranded DNA.. A type II topoisomerase that negatively supercoils closed circular double-stranded (ds) DNA in an ATP-dependent manner to modulate DNA topology and maintain chromosomes in an underwound state. Negative supercoiling favors strand separation, and DNA replication, transcription, recombination and repair, all of which involve strand separation. Also able to catalyze the interconversion of other topological isomers of dsDNA rings, including catenanes and knotted rings. Type II topoisomerases break and join 2 DNA strands simultaneously in an ATP-dependent manner. This Neisseria gonorrhoeae protein is Antibiotic resistant DNA gyrase subunit B.